Consider the following 72-residue polypeptide: Translation initiation factor IF-1 (72 aa).

Residues 1 to 72 (MAKSDVIEVD…DKGRITYRYK (72 aa)) form the S1-like domain.

Belongs to the IF-1 family. As to quaternary structure, component of the 30S ribosomal translation pre-initiation complex which assembles on the 30S ribosome in the order IF-2 and IF-3, IF-1 and N-formylmethionyl-tRNA(fMet); mRNA recruitment can occur at any time during PIC assembly.

The protein localises to the cytoplasm. One of the essential components for the initiation of protein synthesis. Stabilizes the binding of IF-2 and IF-3 on the 30S subunit to which N-formylmethionyl-tRNA(fMet) subsequently binds. Helps modulate mRNA selection, yielding the 30S pre-initiation complex (PIC). Upon addition of the 50S ribosomal subunit IF-1, IF-2 and IF-3 are released leaving the mature 70S translation initiation complex. The chain is Translation initiation factor IF-1 from Sulfurimonas denitrificans (strain ATCC 33889 / DSM 1251) (Thiomicrospira denitrificans (strain ATCC 33889 / DSM 1251)).